Reading from the N-terminus, the 593-residue chain is Brain-enriched guanylate kinase-associated protein (593 aa).

M1 is subject to N-acetylmethionine. Y137 carries the phosphotyrosine modification. 6 positions are modified to phosphoserine: S200, S229, S246, S265, S346, and S373. R381 bears the Asymmetric dimethylarginine mark. 9 positions are modified to phosphoserine: S455, S465, S475, S477, S500, S502, S506, S553, and S563. The disordered stretch occupies residues 499 to 593; that stretch reads LSLSPGRSAD…KAQLYGTLLN (95 aa).

As to quaternary structure, interacts with DLG4 and DLGAP1 and forms a ternary complex.

It localises to the cytoplasm. It is found in the membrane. In terms of biological role, may sustain the structure of the postsynaptic density (PSD). The chain is Brain-enriched guanylate kinase-associated protein (BEGAIN) from Homo sapiens (Human).